A 115-amino-acid chain; its full sequence is Basic leucine zipper transcriptional factor ATF-like (115 aa).

Residues 1–57 (MQQEPDRNEQGYCSSPPSSNKQDSSDDTKKIQRREKNRIAAQKSRQRQTQKADSLHI) form a disordered region. Residues 27-90 (DTKKIQRREK…KYLTCVLSTH (64 aa)) enclose the bZIP domain. The interval 29–51 (KKIQRREKNRIAAQKSRQRQTQK) is basic motif. The tract at residues 55 to 83 (LHIESENLERLNSALRGEISGLREELKYL) is leucine-zipper.

It belongs to the bZIP family.

It is found in the nucleus. It localises to the cytoplasm. Its function is as follows. AP-1 family transcription factor that controls the differentiation of lineage-specific cells in the immune system: specifically mediates the differentiation of T-helper 17 cells (Th17), follicular T-helper cells (TfH), CD8(+) dendritic cells and class-switch recombination (CSR) in B-cells. This chain is Basic leucine zipper transcriptional factor ATF-like (batf), found in Xenopus tropicalis (Western clawed frog).